Reading from the N-terminus, the 526-residue chain is Nucleobase-ascorbate transporter 4 (526 aa).

The next 12 membrane-spanning stretches (helical) occupy residues 42–62, 69–89, 91–111, 131–151, 157–177, 186–206, 217–237, 282–302, 359–381, 388–410, 420–440, and 457–477; these read IVMLGTTVIIPSILVPLMGGG, VINTVLFVSGINTLLQSLFGS, LPVVMGASYAYLIPALYITFS, IQGALIIASISHMIMGFFGLW, FLSPLSAAPLVILTGVGLLAF, IEIGLPALIILIILSQYLPHL, FAVLFTIAIVWAYAEILTAAG, AFAMMAATYVAIVETTGSFIA, RVVQISAGFMIFFSIFGKFGAVL, IFAALYCVLFAYVASAGLGLLQF, FILGFSIFIGLSVAQYFTEYL, and VIMQVIFSSAATVGIMAAFLL.

The protein belongs to the nucleobase:cation symporter-2 (NCS2) (TC 2.A.40) family. Highly expressed in the root central cylinder. Expressed in the filaments and stigmatic papillae of pollinated flowers and developing siliques.

It is found in the membrane. In Arabidopsis thaliana (Mouse-ear cress), this protein is Nucleobase-ascorbate transporter 4 (NAT4).